Here is a 174-residue protein sequence, read N- to C-terminus: Small ribosomal subunit protein uS5 (174 aa).

Residues 16–79 form the S5 DRBM domain; sequence FSELIVSVRR…NAAKKNMIRV (64 aa).

Belongs to the universal ribosomal protein uS5 family. In terms of assembly, part of the 30S ribosomal subunit. Contacts proteins S4 and S8.

With S4 and S12 plays an important role in translational accuracy. In terms of biological role, located at the back of the 30S subunit body where it stabilizes the conformation of the head with respect to the body. This chain is Small ribosomal subunit protein uS5, found in Ehrlichia canis (strain Jake).